Reading from the N-terminus, the 567-residue chain is MDMDPPTNNPSPPGPPDSPPPEKRLASLSLRTSHLPPDFEIHDDYDDDDDEGYLTAVSRVGSISTSASAWKDDLEDADVAPPSPSSSGYAAERGTSLASSAAANDDPQPQPDDDDWPRDKKHLHEDDTSASWRKRKKHFFILSNSGKPIYSRYGDEHKLAGFSATLQAIISFVENSGDHIKFVRAAKHQIVFLVKGPIYLVCISCTEESYEGLRGQLELMYGQMLLILTKSVNRCFEKNPKFDMAPLLGGTDAVFLSLIHAFSWNPATFLHAYTCLPLAQSTRQAASAVLQDIADSGVLFALLMCEHKVISLVGAQKATLHPDDIFLLSNFILSSESFRTSESFSPICLPRYNSMAFLYAYVHFFDENTYLTLLTARSDAFYDLKDSRSRIQNVLLKANVLVEVQRSLRESALRIEDLPADPSSQSVSPPPQFSQDLHFQLLSSEMAIGGPAGLWHFIYKSIYLDQYVSSEFPLIISNPKQQKRLYKAYQKLYASMHDKATGPHKTQFRRDEDYVLFCWITQDFELYAAFNPLADKSQAIKVCNRVCQWIRDLENEIFVYGESTLSW.

Disordered regions lie at residues 1–52 and 65–129; these read MDMD…DDEG and TSAS…DDTS. Positions 7–19 are enriched in pro residues; sequence TNNPSPPGPPDSP. Over residues 43–52 the composition is skewed to acidic residues; sequence DDYDDDDDEG.

It belongs to the MON1/SAND family. Interacts with CCZ1A, CCZ1B and RABF2B.

The protein localises to the endosome. The protein resides in the prevacuolar compartment. In terms of biological role, plays an important role in membrane trafficking through the secretory apparatus. In complex with CCZ1, acts as a guanine exchange factor (GEF) for Rab7 protein family. Promotes the exchange of GDP to GTP, converting it from an inactive GDP-bound form into an active GTP-bound form. The active form is involved in protein trafficking from prevacuolar compartments (PVCs) to vacuoles. May serve as a linker between Rab5 and Rab7 protein families in PVCs and mediate PVC maturation. The chain is Vacuolar fusion protein MON1 homolog from Oryza sativa subsp. japonica (Rice).